A 268-amino-acid chain; its full sequence is Interleukin-1 alpha (268 aa).

Positions 1–112 (MAKVPDLFED…NTEEEIIKPR (112 aa)) are excised as a propeptide. N6-acetyllysine is present on Lys-82. The segment at 82–86 (KKRRL) is nuclear localization signal (NLS). Position 87 is a phosphoserine (Ser-87). N-linked (GlcNAc...) asparagine glycans are attached at residues Asn-102 and Asn-141.

This sequence belongs to the IL-1 family. Monomer. Interacts with TMED10; the interaction mediates the translocation from the cytoplasm into the ERGIC (endoplasmic reticulum-Golgi intermediate compartment) and thereby secretion. Interacts with IL1R1. Interacts with S100A13; this interaction is the first step in the export of IL1A, followed by direct translocation of this complex across the plasma membrane. Acetylated within its nuclear localization sequence, which impacts subcellular localization. Post-translationally, proteolytic processed by CAPN1 in a calcium-dependent manner. Cleavage from 31 kDa precursor to 18 kDa biologically active molecules. In terms of processing, phosphorylated. Phosphorylation greatly enhances susceptibility to digestion and promotes the conversion of pre-IL1A alpha to the biologically active IL1A.

The protein resides in the nucleus. It is found in the cytoplasm. Its subcellular location is the secreted. In terms of biological role, cytokine constitutively present intracellularly in nearly all resting non-hematopoietic cells that plays an important role in inflammation and bridges the innate and adaptive immune systems. After binding to its receptor IL1R1 together with its accessory protein IL1RAP, forms the high affinity interleukin-1 receptor complex. Signaling involves the recruitment of adapter molecules such as MYD88, IRAK1 or IRAK4. In turn, mediates the activation of NF-kappa-B and the three MAPK pathways p38, p42/p44 and JNK pathways. Within the cell, acts as an alarmin and cell death results in its liberation in the extracellular space after disruption of the cell membrane to induce inflammation and alert the host to injury or damage. In addition to its role as a danger signal, which occurs when the cytokine is passively released by cell necrosis, directly senses DNA damage and acts as signal for genotoxic stress without loss of cell integrity. The polypeptide is Interleukin-1 alpha (IL1A) (Bos taurus (Bovine)).